We begin with the raw amino-acid sequence, 494 residues long: MGSSVSKNISKVATEALARASSDILLQTDLTTDQTQVISVSDVGGDVVISGNEFIQKATINMKALMNALIQENVQQNLTLQIAQAAKSIVSGFNMFQLPNAQNEIDLFVRASIELVNTISQVCTSSVSENYLIDIKRVKGSVRIQNNTVRQFVDIFGSCVQNAVASNAIFQDLQAKLDQSATSKADGLTLWQVAALVAIVLGVPVVSVIGGIAVAGRWMFPISILAGAGCLVVWSSQANTTMADHAFSRFVRNTSDCLGTALGPVLQTLPNSNAAAQSCLSNADCVAFDWQGTVVDDKGTNKVLTPPQTTFYNKVSSICEQAVKSNPDTTRLVRLPIFAKGVGSPQSKASPPADVYLDTATTNYYFFDPPTNMWVKQGTFAHAEWSAAKNQIDWGTITPTVSTPGTPGNIYVYYGSDNPIYFYVYVKTADSWSLYTPTLRGPGLVTDTPATINVSGFKVNQRRQWLLYLGVALIIVGIFGSILAFNSRRPEERK.

A lipid anchor (N-myristoyl glycine; by host) is attached at glycine 2. 3 consecutive transmembrane segments (helical) span residues 193-213 (VAAL…GGIA), 214-234 (VAGR…LVVW), and 465-485 (WLLY…ILAF).

This sequence belongs to the IIV-6 118L/458R family.

It is found in the membrane. The polypeptide is Putative myristoylated protein 006R (Aedes vexans (Inland floodwater mosquito)).